A 384-amino-acid chain; its full sequence is Protein V (384 aa).

Disordered stretches follow at residues 1 to 23 (MDQDAFILKEDSEVEREAPGGRE) and 38 to 317 (SEPT…TKKG). Positions 7–20 (ILKEDSEVEREAPG) are enriched in basic and acidic residues. The segment covering 50–59 (LHNTINTPQG) has biased composition (polar residues). Ser68 carries the phosphoserine; by host modification. The segment covering 83 to 101 (RSGEESRVSGRTSKPEAEA) has biased composition (basic and acidic residues). Ser125 is modified (phosphoserine; by host). Residues 150–168 (GIEDENREMAAHPDKRGED) are compositionally biased toward basic and acidic residues. A compositionally biased stretch (polar residues) spans 191–206 (ASNNGRSMEPGSSHSA). Phosphoserine; by host occurs at positions 192, 249, 257, and 260. His318, Cys337, Cys341, Cys353, Cys355, Cys358, Cys362, and Cys365 together coordinate Zn(2+).

It belongs to the paramyxoviruses V protein family. Interacts with host IFIH1/MDA5 and DHX58/LGP2. Interacts with host IRF3. Interacts with host RIGI regulatory protein (via CARDs domain) and host TRIM25 (via SPRY domain); these interactions prevent TRIM25-mediated ubiquitination of RIG-I and disrupts downstream RIG-I signaling.

The protein resides in the host cytoplasm. Functionally, plays an essential role in the inhibition of host immune response. Prevents the establishment of cellular antiviral state by blocking interferon-alpha/beta (IFN-alpha/beta) production and signaling pathway. Interacts with host IFIH1/MDA5 and DHX58/LGP2 to inhibit the transduction pathway involved in the activation of IFN-beta promoter, thus protecting the virus against cell antiviral state. Also interacts with and inhibits host IRF3. Blocks the type I interferon signaling pathway by disrupting the RIG-I signaling pathway. The chain is Protein V (P/V/C) from Sendai virus (strain Z) (SeV).